The chain runs to 362 residues: Exopolygalacturonase (362 aa).

PbH1 repeat units lie at residues 138–164 (CKNLTFERFKISAAETSINTDGIHIGR), 165–186 (SDGVNIINTEIKTGDDCISLGD), 188–208 (SKNINITNITCGPGHGISVGS), and 218–239 (VVGIYVKNCTITGSQNGVRIKT). N-linked (GlcNAc...) asparagine glycosylation occurs at Asn-140. Asp-179 (proton donor) is an active-site residue. N-linked (GlcNAc...) asparagine glycosylation is found at Asn-192 and Asn-195. His-202 is a catalytic residue. Residue Asn-225 is glycosylated (N-linked (GlcNAc...) asparagine).

The protein belongs to the glycosyl hydrolase 28 family. As to expression, pollen tubes growing through the style during pollination.

The protein resides in the secreted. Its subcellular location is the cell wall. It catalyses the reaction [(1-&gt;4)-alpha-D-galacturonosyl](n) + H2O = alpha-D-galacturonate + [(1-&gt;4)-alpha-D-galacturonosyl](n-1). Its function is as follows. May function in depolymerizing pectin during pollen development, germination, and tube growth. Acts as an exo-polygalacturonase. This chain is Exopolygalacturonase, found in Oenothera organensis (Evening primrose).